The primary structure comprises 477 residues: MIRRLQDNGDLIRAFPRVHFVGIGGAGMTGIAEVMLTLGYEVSGSDNADNVATRRLATLGARVMRGHSAANVLGTDCVVVSSAIREDNPELMEARSQRIPIMPRAAMLAELMRFRHGIAVAGTHGKTTTTSLIAAVLSEGGLDPTFVIGGQLLAAGANAKLGAGQWLVVEADESDGSFLRLNPLVAVVTNIDADHLENYGNDFSRIKDAFTEFLQRLPFYGLALLCLDDPEVAELAGKARRHVMTYGIDAAADVRAEDVVQDGARMYFTLCLPEGKVIPVTLALPGRHNVLNALAASAVGWQLGVPPEVIGRALKSFVGIGRRFNDLGDVAIGNGACVRLIDDYGHHPRELEAVFAAARGGWPDKRLVVAFQPHRYSRTRDQFDAFAAVLSSVDALVLSEVYPAGEVPIPGADAKALARAIRARGRSEPVVVGQVASLIEVLPDVLQEGDLLLMMGAGDIGSIAQRIVHDGFVFGEV.

122–128 lines the ATP pocket; that stretch reads GTHGKTT.

The protein belongs to the MurCDEF family.

Its subcellular location is the cytoplasm. The enzyme catalyses UDP-N-acetyl-alpha-D-muramate + L-alanine + ATP = UDP-N-acetyl-alpha-D-muramoyl-L-alanine + ADP + phosphate + H(+). It participates in cell wall biogenesis; peptidoglycan biosynthesis. Functionally, cell wall formation. This chain is UDP-N-acetylmuramate--L-alanine ligase, found in Xylella fastidiosa (strain M12).